A 118-amino-acid chain; its full sequence is Ribulose bisphosphate carboxylase small subunit (118 aa).

Belongs to the RuBisCO small chain family. In terms of assembly, heterohexadecamer of 8 large and 8 small subunits.

It is found in the carboxysome. In terms of biological role, ruBisCO catalyzes two reactions: the carboxylation of D-ribulose 1,5-bisphosphate, the primary event in carbon dioxide fixation, as well as the oxidative fragmentation of the pentose substrate in the photorespiration process. Both reactions occur simultaneously and in competition at the same active site. Although the small subunit is not catalytic it is essential for maximal activity. The polypeptide is Ribulose bisphosphate carboxylase small subunit (Thermosynechococcus vestitus (strain NIES-2133 / IAM M-273 / BP-1)).